Here is a 257-residue protein sequence, read N- to C-terminus: MMKQEQMTVVRHKPIAKNIYELMLSGHLVEEMNAPGQFVHVKVTSQADPLLRRPLSLCRIDQNARECTLIYRKEGIGTTLLSEKRPGETIDVLGPLGNGFPLDAAQTGRRALLVGGGIGVPPLYELAKQLVKKGVIVTSVLGFQTKEVVFYEREFAEFGETYIATVDGSHGTKGFVTDVIHERAISFDVLYACGPKPMLKALEQMFPDKEVYLSLEERMGCGIGACFACVCRVPNSETAYKKVCCDGPVFKAGEVVL.

Positions 2-102 (MKQEQMTVVR…LGPLGNGFPL (101 aa)) constitute an FAD-binding FR-type domain. Residues 53–56 (RPLS), 70–72 (IYR), and 77–78 (GT) contribute to the FAD site. Residues Cys221, Cys226, Cys229, and Cys244 each coordinate [2Fe-2S] cluster.

This sequence belongs to the PyrK family. In terms of assembly, heterotetramer of 2 PyrK and 2 PyrD type B subunits. The cofactor is [2Fe-2S] cluster. Requires FAD as cofactor.

Its pathway is pyrimidine metabolism; UMP biosynthesis via de novo pathway; orotate from (S)-dihydroorotate (NAD(+) route): step 1/1. In terms of biological role, responsible for channeling the electrons from the oxidation of dihydroorotate from the FMN redox center in the PyrD type B subunit to the ultimate electron acceptor NAD(+). The sequence is that of Dihydroorotate dehydrogenase B (NAD(+)), electron transfer subunit from Geobacillus sp. (strain WCH70).